The following is a 542-amino-acid chain: MFS-type efflux pump MMF1 (542 aa).

Helical transmembrane passes span 24-44 (WTIF…MTMI), 51-71 (IVAA…AFLL), 98-118 (VIFL…VLVV), 124-144 (GLGG…LTTL), 151-171 (FGLI…LGGV), 179-199 (WIFW…VLFL), 215-235 (LDLV…IAVT), and 248-268 (VWVP…VEWI). Asn285 carries an N-linked (GlcNAc...) asparagine glycan. 6 helical membrane-spanning segments follow: residues 296–316 (FLHG…FQAI), 326–346 (IWSF…GLLI), 355–375 (LIFI…HWSV), 384–404 (ISQI…LPPI), 419–439 (AYAF…TTIF), and 490–510 (ISDS…STFL).

The protein belongs to the major facilitator superfamily.

Its subcellular location is the cell membrane. Functionally, glycosyltransferase; part of the gene cluster that mediates the biosynthesis of mannosylerythritol lipids (MELs), surface-active substances that enhance the availability of water-insoluble substrates. MMF1 is directly involved in the secretiopn of MALs. The sequence is that of MFS-type efflux pump MMF1 from Pseudozyma antarctica (strain T-34) (Yeast).